The following is a 368-amino-acid chain: Peptide chain release factor 2 (368 aa).

Glutamine 250 carries the post-translational modification N5-methylglutamine.

It belongs to the prokaryotic/mitochondrial release factor family. Methylated by PrmC. Methylation increases the termination efficiency of RF2.

The protein resides in the cytoplasm. Functionally, peptide chain release factor 2 directs the termination of translation in response to the peptide chain termination codons UGA and UAA. This Rickettsia felis (strain ATCC VR-1525 / URRWXCal2) (Rickettsia azadi) protein is Peptide chain release factor 2.